The sequence spans 243 residues: tRNA (guanine-N(1)-)-methyltransferase (243 aa).

S-adenosyl-L-methionine is bound by residues Gly108 and 127 to 132; that span reads LGDFVL.

It belongs to the RNA methyltransferase TrmD family. Homodimer.

Its subcellular location is the cytoplasm. It carries out the reaction guanosine(37) in tRNA + S-adenosyl-L-methionine = N(1)-methylguanosine(37) in tRNA + S-adenosyl-L-homocysteine + H(+). Specifically methylates guanosine-37 in various tRNAs. The sequence is that of tRNA (guanine-N(1)-)-methyltransferase from Streptococcus pyogenes serotype M2 (strain MGAS10270).